The primary structure comprises 339 residues: D-erythrose-4-phosphate dehydrogenase (339 aa).

Position 11 to 12 (11 to 12 (RI)) interacts with NAD(+). Substrate is bound by residues 158 to 160 (SCT), Arg204, 217 to 218 (TK), and Arg240. Cys159 (nucleophile) is an active-site residue. Asn322 provides a ligand contact to NAD(+).

The protein belongs to the glyceraldehyde-3-phosphate dehydrogenase family. Epd subfamily. In terms of assembly, homotetramer.

It is found in the cytoplasm. It carries out the reaction D-erythrose 4-phosphate + NAD(+) + H2O = 4-phospho-D-erythronate + NADH + 2 H(+). It functions in the pathway cofactor biosynthesis; pyridoxine 5'-phosphate biosynthesis; pyridoxine 5'-phosphate from D-erythrose 4-phosphate: step 1/5. In terms of biological role, catalyzes the NAD-dependent conversion of D-erythrose 4-phosphate to 4-phosphoerythronate. The polypeptide is D-erythrose-4-phosphate dehydrogenase (Aliivibrio fischeri (strain ATCC 700601 / ES114) (Vibrio fischeri)).